The primary structure comprises 367 residues: 2-oxoisovalerate dehydrogenase subunit alpha (367 aa).

Residues Phe66, Tyr95, 128 to 131, and Ser144 each bind substrate; that span reads MPEH. A thiamine diphosphate-binding site is contributed by 94-96; sequence YYR. Thiamine diphosphate is bound by residues 144–146, 174–180, 204–208, and His273; these read SPI, GDGATSE, and NFYAI. Mg(2+)-binding residues include Asp175, Asn204, and Tyr206.

It belongs to the BCKDHA family. Heterotetramer of two alpha and two beta chains. Directly associated with ODBB in the E1 complex. Thiamine diphosphate serves as cofactor.

It catalyses the reaction N(6)-[(R)-lipoyl]-L-lysyl-[protein] + 3-methyl-2-oxobutanoate + H(+) = N(6)-[(R)-S(8)-2-methylpropanoyldihydrolipoyl]-L-lysyl-[protein] + CO2. Functionally, the branched-chain alpha-keto dehydrogenase complex catalyzes the overall conversion of alpha-keto acids to acyl-CoA and CO(2). It contains multiple copies of three enzymatic components: branched-chain alpha-keto acid decarboxylase (E1), lipoamide acyltransferase (E2) and lipoamide dehydrogenase (E3). This chain is 2-oxoisovalerate dehydrogenase subunit alpha, found in Thermus thermophilus (strain ATCC 27634 / DSM 579 / HB8).